A 595-amino-acid chain; its full sequence is MEKLSTAASLFCVVVAATALAMAVVGGEAAVVEQTFMVHEMNVTHLCNTTKIYVVNGRFPGPTVDVTEGDTVVVHVINRLPHGLTIHWHGVRQMRSCWADGAGYVTECPIHPGGEKTYRFNVTGQVGTLWWHAHVTCLRATINGAFIIRPRNGKYPFLTPAKDVPIIIGEWWELDLIELDRRMLDGNFDDNPLSATINGKLGDLSNCSSTVEESFVLDVKRGESYLLRVINTALFSEYYFKVAGHTFTVVGADGNYLTPYKTDMVTVAPGEAIDVLMFTDAPPAYYHMVALANQPPPPDLQIPQLTSRGLIRYAGAAMDSNNLPMPMPVMPDQHNTMPSYYFRRNLTGLALPEQQQRHRVPAHVDERLLITLGLGSICRGGNTTTCKRGRSPETVVVATMNNVSFHHTNATALLEHYYDGRPEGVYTEDFPVRPPRPFNYTDRELIPAGPLEAALEPTAKAMRLRRFRYNASVEIVFQSTTLLQSDSNPMHLHGYDVFVLAQGLGNFDPKRDVEKFNYHNPQLRNTVQVPRGGWAAVRFLADNPGMWYLHCHFEFHIIMGMATAFIVEDGPTPETSLPPPPPEFKRCGTNGLSQP.

A signal peptide spans 1–29 (MEKLSTAASLFCVVVAATALAMAVVGGEA). 2 consecutive Plastocyanin-like domains span residues 37–153 (MVHE…PRNG) and 162–316 (KDVP…YAGA). N-linked (GlcNAc...) asparagine glycans are attached at residues asparagine 42 and asparagine 48. Positions 87 and 89 each coordinate Cu cation. Asparagine 121 carries an N-linked (GlcNAc...) asparagine glycan. Cu cation contacts are provided by histidine 132 and histidine 134. Residues asparagine 206, asparagine 345, asparagine 382, asparagine 402, asparagine 409, asparagine 439, and asparagine 470 are each glycosylated (N-linked (GlcNAc...) asparagine). Positions 429–571 (DFPVRPPRPF…ATAFIVEDGP (143 aa)) constitute a Plastocyanin-like 3 domain. The Cu cation site is built by asparagine 488, histidine 491, histidine 493, histidine 550, cysteine 551, histidine 552, histidine 556, and methionine 561. A disordered region spans residues 570-595 (GPTPETSLPPPPPEFKRCGTNGLSQP).

Belongs to the multicopper oxidase family. Cu cation serves as cofactor.

The protein localises to the secreted. Its subcellular location is the extracellular space. It localises to the apoplast. The enzyme catalyses 4 hydroquinone + O2 = 4 benzosemiquinone + 2 H2O. In terms of biological role, lignin degradation and detoxification of lignin-derived products. This Oryza sativa subsp. japonica (Rice) protein is Laccase-18 (LAC18).